The following is a 122-amino-acid chain: Basic phospholipase A2 homolog (122 aa).

7 disulfide bridges follow: C26–C116, C28–C44, C43–C96, C49–C122, C50–C89, C57–C82, and C75–C87. Residues 106–117 (KKHRVTVKFLCK) form an important for membrane-damaging activities in eukaryotes and bacteria; heparin-binding region.

It belongs to the phospholipase A2 family. Group II subfamily. K49 sub-subfamily. In terms of assembly, homodimer; non-covalently linked. As to expression, expressed by the venom gland.

It is found in the secreted. In terms of biological role, snake venom phospholipase A2 (PLA2) that has almost no phospholipase A2 activity. Is myotoxic. Displays edema-inducing activities. A model of myotoxic mechanism has been proposed: an apo Lys49-PLA2 is activated by the entrance of a hydrophobic molecule (e.g. fatty acid) at the hydrophobic channel of the protein leading to a reorientation of a monomer. This reorientation causes a transition between 'inactive' to 'active' states, causing alignment of C-terminal and membrane-docking sites (MDoS) side-by-side and putting the membrane-disruption sites (MDiS) in the same plane, exposed to solvent and in a symmetric position for both monomers. The MDoS region stabilizes the toxin on membrane by the interaction of charged residues with phospholipid head groups. Subsequently, the MDiS region destabilizes the membrane with penetration of hydrophobic residues. This insertion causes a disorganization of the membrane, allowing an uncontrolled influx of ions (i.e. calcium and sodium), and eventually triggering irreversible intracellular alterations and cell death. The sequence is that of Basic phospholipase A2 homolog from Protobothrops mucrosquamatus (Taiwan habu).